We begin with the raw amino-acid sequence, 193 residues long: dCTP deaminase (193 aa).

DCTP-binding positions include 110–115 (RSSLAR), aspartate 128, 136–138 (VLE), tyrosine 171, lysine 178, and glutamine 182. Glutamate 138 serves as the catalytic Proton donor/acceptor. A disordered region spans residues 169 to 193 (RPYNRRQDAKYRDQQGAVASRIDKD).

It belongs to the dCTP deaminase family. Homotrimer.

The enzyme catalyses dCTP + H2O + H(+) = dUTP + NH4(+). Its pathway is pyrimidine metabolism; dUMP biosynthesis; dUMP from dCTP (dUTP route): step 1/2. Catalyzes the deamination of dCTP to dUTP. The chain is dCTP deaminase from Salmonella paratyphi B (strain ATCC BAA-1250 / SPB7).